The chain runs to 287 residues: Pyridoxal kinase PdxY (287 aa).

Substrate is bound by residues S10 and 45-46 (TQ). ATP-binding positions include D112, A144, E149, K182, and 209–212 (RPLV). D224 serves as a coordination point for substrate.

This sequence belongs to the pyridoxine kinase family. PdxY subfamily. Homodimer. Mg(2+) serves as cofactor.

The catalysed reaction is pyridoxal + ATP = pyridoxal 5'-phosphate + ADP + H(+). It functions in the pathway cofactor metabolism; pyridoxal 5'-phosphate salvage; pyridoxal 5'-phosphate from pyridoxal: step 1/1. In terms of biological role, pyridoxal kinase involved in the salvage pathway of pyridoxal 5'-phosphate (PLP). Catalyzes the phosphorylation of pyridoxal to PLP. The sequence is that of Pyridoxal kinase PdxY from Escherichia coli (strain UTI89 / UPEC).